The primary structure comprises 68 residues: Large ribosomal subunit protein bL35 (68 aa).

This sequence belongs to the bacterial ribosomal protein bL35 family.

This is Large ribosomal subunit protein bL35 from Orientia tsutsugamushi (strain Ikeda) (Rickettsia tsutsugamushi).